We begin with the raw amino-acid sequence, 352 residues long: Divinyl chlorophyll a/b light-harvesting protein PcbB (352 aa).

Transmembrane regions (helical) follow at residues 27 to 47 (FIAA…AFTL), 89 to 109 (CTVI…GGIL), 142 to 162 (FILG…VEWA), 203 to 223 (VMGG…FHII), 243 to 263 (AVLS…AFWS), and 307 to 327 (LANV…WHAL).

It belongs to the PsbB/PsbC family. IsiA/Pcb subfamily. As to quaternary structure, the antenna complex consists of divinyl chlorophylls (a and b) and divinyl chlorophyll a/b binding proteins and binds more divinyl chlorophyll b than does the antenna complex from high-light-adapted Prochlorococcus. Requires divinyl chlorophyll a as cofactor. It depends on divinyl chlorophyll b as a cofactor.

The protein localises to the cellular thylakoid membrane. Functionally, the antenna complex functions as a light receptor, it captures and delivers excitation energy to photosystems II and I. The Prochlorales pcb genes are not related to higher plant LHCs. This Prochlorococcus marinus (strain NATL2A) protein is Divinyl chlorophyll a/b light-harvesting protein PcbB (pcbB).